Here is a 333-residue protein sequence, read N- to C-terminus: Holliday junction branch migration complex subunit RuvB (333 aa).

Residues 1–182 (MDERLLSGES…FGVLSRLEYY (182 aa)) form a large ATPase domain (RuvB-L) region. ATP is bound by residues leucine 21, arginine 22, glycine 63, lysine 66, threonine 67, threonine 68, 129–131 (EDF), arginine 172, tyrosine 182, and arginine 219. Threonine 67 contacts Mg(2+). The segment at 183-253 (TVDQLSAIVE…ITQMALELLQ (71 aa)) is small ATPAse domain (RuvB-S). The tract at residues 256–333 (KLGLDHIDHK…EHFGMEMPKV (78 aa)) is head domain (RuvB-H). The DNA site is built by arginine 311 and arginine 316.

Belongs to the RuvB family. Homohexamer. Forms an RuvA(8)-RuvB(12)-Holliday junction (HJ) complex. HJ DNA is sandwiched between 2 RuvA tetramers; dsDNA enters through RuvA and exits via RuvB. An RuvB hexamer assembles on each DNA strand where it exits the tetramer. Each RuvB hexamer is contacted by two RuvA subunits (via domain III) on 2 adjacent RuvB subunits; this complex drives branch migration. In the full resolvosome a probable DNA-RuvA(4)-RuvB(12)-RuvC(2) complex forms which resolves the HJ.

It is found in the cytoplasm. The catalysed reaction is ATP + H2O = ADP + phosphate + H(+). Its function is as follows. The RuvA-RuvB-RuvC complex processes Holliday junction (HJ) DNA during genetic recombination and DNA repair, while the RuvA-RuvB complex plays an important role in the rescue of blocked DNA replication forks via replication fork reversal (RFR). RuvA specifically binds to HJ cruciform DNA, conferring on it an open structure. The RuvB hexamer acts as an ATP-dependent pump, pulling dsDNA into and through the RuvAB complex. RuvB forms 2 homohexamers on either side of HJ DNA bound by 1 or 2 RuvA tetramers; 4 subunits per hexamer contact DNA at a time. Coordinated motions by a converter formed by DNA-disengaged RuvB subunits stimulates ATP hydrolysis and nucleotide exchange. Immobilization of the converter enables RuvB to convert the ATP-contained energy into a lever motion, pulling 2 nucleotides of DNA out of the RuvA tetramer per ATP hydrolyzed, thus driving DNA branch migration. The RuvB motors rotate together with the DNA substrate, which together with the progressing nucleotide cycle form the mechanistic basis for DNA recombination by continuous HJ branch migration. Branch migration allows RuvC to scan DNA until it finds its consensus sequence, where it cleaves and resolves cruciform DNA. This is Holliday junction branch migration complex subunit RuvB from Bacillus cereus (strain 03BB102).